Consider the following 493-residue polypeptide: Alpha-amylase-related protein (493 aa).

An N-terminal signal peptide occupies residues 1-19 (MFKFALTQTLCLAGSLSLA). Gln20 carries the post-translational modification Pyrrolidone carboxylic acid. Cys47 and Cys103 are joined by a disulfide. Positions 117, 168, and 177 each coordinate Ca(2+). Cysteines 156 and 170 form a disulfide. Arg205 contributes to the chloride binding site. The Nucleophile role is filled by Asp207. A Ca(2+)-binding site is contributed by His211. Glu244 acts as the Proton donor in catalysis. Asn307 and Arg342 together coordinate chloride. Disulfide bonds link Cys375-Cys381, Cys417-Cys440, and Cys447-Cys459.

This sequence belongs to the glycosyl hydrolase 13 family. Monomer. Ca(2+) serves as cofactor. Chloride is required as a cofactor.

The protein localises to the secreted. The enzyme catalyses Endohydrolysis of (1-&gt;4)-alpha-D-glucosidic linkages in polysaccharides containing three or more (1-&gt;4)-alpha-linked D-glucose units.. This is Alpha-amylase-related protein (Amyrel) from Drosophila mauritiana (Fruit fly).